Here is a 103-residue protein sequence, read N- to C-terminus: Large ribosomal subunit protein bL21 (103 aa).

This sequence belongs to the bacterial ribosomal protein bL21 family. In terms of assembly, part of the 50S ribosomal subunit. Contacts protein L20.

In terms of biological role, this protein binds to 23S rRNA in the presence of protein L20. The sequence is that of Large ribosomal subunit protein bL21 from Polaromonas sp. (strain JS666 / ATCC BAA-500).